The sequence spans 256 residues: Transmembrane protein 187 (256 aa).

7 consecutive transmembrane segments (helical) span residues 8 to 28 (ALFH…TGIF), 51 to 71 (FLAM…GVYW), 94 to 112 (VFAG…RIGM), 119 to 139 (VLDQ…CLCL), 146 to 168 (WLFL…HPHG), 193 to 213 (NISS…FVVL), and 233 to 253 (FWSK…LTSL).

Its subcellular location is the membrane. The polypeptide is Transmembrane protein 187 (TMEM187) (Bos taurus (Bovine)).